A 161-amino-acid chain; its full sequence is Large ribosomal subunit protein uL10 (161 aa).

Belongs to the universal ribosomal protein uL10 family. As to quaternary structure, part of the ribosomal stalk of the 50S ribosomal subunit. The N-terminus interacts with L11 and the large rRNA to form the base of the stalk. The C-terminus forms an elongated spine to which L12 dimers bind in a sequential fashion forming a multimeric L10(L12)X complex.

In terms of biological role, forms part of the ribosomal stalk, playing a central role in the interaction of the ribosome with GTP-bound translation factors. This is Large ribosomal subunit protein uL10 from Campylobacter curvus (strain 525.92).